The sequence spans 703 residues: WPP domain-interacting tail-anchored protein 1 (703 aa).

The segment covering 1-12 has biased composition (basic and acidic residues); the sequence is METETEHDRTVS. 2 disordered regions span residues 1–27 and 86–107; these read METETEHDRTVSVDDNDSLVPEPSSTK and FVSKKEEDEEEPSSNVDDDDDS. The segment covering 92-107 has biased composition (acidic residues); that stretch reads EDEEEPSSNVDDDDDS. Positions 118 to 183 form a coiled coil; sequence SSILNSEVKE…MEQVVEMKKQ (66 aa). Residues 189–208 form a disordered region; the sequence is RLSSGLDEQGSWSGGQTSVS. The span at 198-208 shows a compositional bias: polar residues; sequence GSWSGGQTSVS. 3 coiled-coil regions span residues 236–265, 318–461, and 500–604; these read LEKSLAKEMELEKKLSESRNTERELEMKLY, KRED…RDKG, and STVS…SREN. The helical transmembrane segment at 679–699 threads the bilayer; sequence FKHILVAILVILISSIAYVIS.

Homodimer. Component of Ran complexes at least composed of WIT1 or WIT2, RANGAP1 or RANGAP2, and WIP1 or WIP2 or WIP3. Interacts with WIP2, WPP1/MAF1, WPP2/MAF2, RANGAP1 and RANGAP2. Component of a ternary complex composed of WPP1, HSP70-1 and WIT1. Interacts with KAKU1. Interacts with WIP1. As to expression, ubiquitous.

The protein localises to the nucleus envelope. The protein resides in the nucleus membrane. Together with WIT2, required for the nuclear envelope docking of RANGAP proteins in root tips. This is WPP domain-interacting tail-anchored protein 1 (WIT1) from Arabidopsis thaliana (Mouse-ear cress).